The chain runs to 460 residues: Cysteine proteinase 7 (460 aa).

A signal peptide spans 1–17; it reads MKVLSALCVLLVSVATA. The propeptide at 18–111 is activation peptide; that stretch reads KQQLSEVEYR…TESDKIFDAS (94 aa). 2 cysteine pairs are disulfide-bonded: cysteine 131/cysteine 176 and cysteine 167/cysteine 210. Cysteine 134 is a catalytic residue. 2 N-linked (GlcNAc...) asparagine glycosylation sites follow: asparagine 226 and asparagine 252. A disulfide bond links cysteine 268 and cysteine 445. The active site involves histidine 275. Residues 285–409 form a disordered region; sequence GSGSSGSHGG…GSSSGSNSNG (125 aa). Residues 294–359 are compositionally biased toward low complexity; that stretch reads GSQSQSAGSD…QSGSQSGNSG (66 aa). The span at 367 to 385 shows a compositional bias: gly residues; the sequence is AGSGSGSGSGSGSGSGSGS. Residues 386-409 show a composition bias toward low complexity; it reads VSGSASGSASGSASGSSSGSNSNG. The active site involves asparagine 423.

It belongs to the peptidase C1 family. Post-translationally, glycosylated; contains GlcNAc-alpha-1-P-Ser residues. Also N-glycosylated.

The protein resides in the lysosome. The protein is Cysteine proteinase 7 (cprG) of Dictyostelium discoideum (Social amoeba).